Reading from the N-terminus, the 586-residue chain is Asparagine synthetase [glutamine-hydrolyzing] 1 (586 aa).

C2 serves as the catalytic For GATase activity. The 184-residue stretch at 2–185 folds into the Glutamine amidotransferase type-2 domain; the sequence is CGILAVLGCS…PGHLYSSRER (184 aa). L-glutamine is bound by residues 50 to 54, 75 to 77, and D98; these read RLAIV and NGE. In terms of domain architecture, Asparagine synthetase spans 193 to 516; that stretch reads PTWFSESIPS…PQNSARLTVP (324 aa). Residues L231, V267, and 341–342 each bind ATP; that span reads SG.

The enzyme catalyses L-aspartate + L-glutamine + ATP + H2O = L-asparagine + L-glutamate + AMP + diphosphate + H(+). It participates in amino-acid biosynthesis; L-asparagine biosynthesis; L-asparagine from L-aspartate (L-Gln route): step 1/1. This Lotus japonicus (Lotus corniculatus var. japonicus) protein is Asparagine synthetase [glutamine-hydrolyzing] 1 (AS1).